The following is a 419-amino-acid chain: MNNQKQQKPTLSGQRFKTRKRDEKERFDPTQFQDCIIQGLTETGTDLEAVAKFLDASGAKLDYRRYAETLFDILVAGGMLAPGGTLADDMMRTDVCVFAAQEDLETMQAFAQVFNKLIRRYKYLEKGFEDGVKKLLLFLKGFSESERNKLAMLTGVLLANGTLNASILNSLYNENLVKEGVSAAFAVKLFKSWINEKDINAVAASLRKVSMDNRLMELFPANKQSVEHFTKYFTEAGLKELSEYVRNQQTIGARKELQKELQEQMSRGDPFKDIILYVKEEMKKNNIPEPVVIGIVWSSVMSTVEWNKKEELVAEQAIKHLKQYSPLLAAFTTQGQSELTLLLKIQEYCYDNIHFMKAFQKIVVLFYKAEVLSEGPILKWYKDAHVAKGKSVFLEQMKKFVEWLKNAEEESESEAEEGD.

At Met-1 the chain carries N-acetylmethionine. The span at 1-15 (MNNQKQQKPTLSGQR) shows a compositional bias: polar residues. The disordered stretch occupies residues 1-26 (MNNQKQQKPTLSGQRFKTRKRDEKER). Ser-12 carries the phosphoserine modification. The W2 domain maps to 247-414 (NQQTIGARKE…KNAEEESESE (168 aa)). Lys-368 participates in a covalent cross-link: Glycyl lysine isopeptide (Lys-Gly) (interchain with G-Cter in SUMO2). Ser-411 and Ser-413 each carry phosphoserine.

It belongs to the BZW family.

In terms of biological role, translation initiation regulator which represses repeat-associated non-AUG (RAN) initiated translation probably by acting as a competitive inhibitor of eukaryotic translation initiation factor 5 (EIF5) function. Enhances histone H4 gene transcription but does not seem to bind DNA directly. In Pongo abelii (Sumatran orangutan), this protein is eIF5-mimic protein 2 (BZW1).